A 449-amino-acid chain; its full sequence is Phosphoglucosamine mutase (449 aa).

The active-site Phosphoserine intermediate is the S100. Residues S100, D241, D243, and D245 each contribute to the Mg(2+) site. At S100 the chain carries Phosphoserine.

The protein belongs to the phosphohexose mutase family. Mg(2+) is required as a cofactor. In terms of processing, activated by phosphorylation.

The enzyme catalyses alpha-D-glucosamine 1-phosphate = D-glucosamine 6-phosphate. Functionally, catalyzes the conversion of glucosamine-6-phosphate to glucosamine-1-phosphate. The sequence is that of Phosphoglucosamine mutase from Clostridium botulinum (strain ATCC 19397 / Type A).